We begin with the raw amino-acid sequence, 79 residues long: Dolichol phosphate-mannose biosynthesis regulatory protein (79 aa).

2 helical membrane-spanning segments follow: residues 8–28 (IGFV…TWVI) and 50–70 (IIIP…FLGL).

Belongs to the DPM2 family. In terms of assembly, component of the dolichol-phosphate mannose (DPM) synthase complex composed of dpm1, dpm2 and dpm3.

Its subcellular location is the endoplasmic reticulum membrane. It participates in protein modification; protein glycosylation. In terms of biological role, regulates the biosynthesis of dolichol phosphate-mannose. Regulatory subunit of the dolichol-phosphate mannose (DPM) synthase complex; essential for the ER localization and stable expression of dpm1. The protein is Dolichol phosphate-mannose biosynthesis regulatory protein (dpm2-1) of Dictyostelium discoideum (Social amoeba).